The primary structure comprises 314 residues: D-alanine--D-alanine ligase (314 aa).

The 196-residue stretch at 112 to 307 (KQVWQSLGLP…FQQLVLSILD (196 aa)) folds into the ATP-grasp domain. 138-193 (AQMLGFPLIVKPAHEGSSIGMAKVGDVAELIAAWRAASAYDAQVLVEQWIQGPEFT) contributes to the ATP binding site. Asp-261, Glu-274, and Asn-276 together coordinate Mg(2+).

Belongs to the D-alanine--D-alanine ligase family. The cofactor is Mg(2+). Mn(2+) serves as cofactor.

It localises to the cytoplasm. The enzyme catalyses 2 D-alanine + ATP = D-alanyl-D-alanine + ADP + phosphate + H(+). The protein operates within cell wall biogenesis; peptidoglycan biosynthesis. Its function is as follows. Cell wall formation. The chain is D-alanine--D-alanine ligase from Stutzerimonas stutzeri (strain A1501) (Pseudomonas stutzeri).